A 253-amino-acid chain; its full sequence is Phosphate import ATP-binding protein PstB (253 aa).

Positions 5–248 (IETINLHVYY…PEHELTEKYV (244 aa)) constitute an ABC transporter domain. ATP is bound at residue 37–44 (GPSGCGKS).

The protein belongs to the ABC transporter superfamily. Phosphate importer (TC 3.A.1.7) family. In terms of assembly, the complex is composed of two ATP-binding proteins (PstB), two transmembrane proteins (PstC and PstA) and a solute-binding protein (PstS).

It is found in the cell membrane. The catalysed reaction is phosphate(out) + ATP + H2O = ADP + 2 phosphate(in) + H(+). Functionally, part of the ABC transporter complex PstSACB involved in phosphate import. Responsible for energy coupling to the transport system. This chain is Phosphate import ATP-binding protein PstB, found in Pyrococcus furiosus (strain ATCC 43587 / DSM 3638 / JCM 8422 / Vc1).